Consider the following 813-residue polypeptide: Immunoglobulin superfamily DCC subclass member 3 (813 aa).

The interval 1 to 21 (MAEPRTASPRRLPALRRPGFL) is disordered. The N-terminal stretch at 1 to 47 (MAEPRTASPRRLPALRRPGFLPPLLPPPPPPLLLLLLLLPLPAPSLG) is a signal peptide. A compositionally biased stretch (low complexity) spans 9 to 19 (PRRLPALRRPG). 4 Ig-like C2-type domains span residues 49–151 (GHSA…ATMS), 151–232 (SDFH…VRVS), 250–333 (PTIL…RTAQ), and 341–428 (PAEF…ARLT). Cystine bridges form between Cys-75/Cys-129 and Cys-172/Cys-221. Asn-105 carries N-linked (GlcNAc...) asparagine glycosylation. N-linked (GlcNAc...) asparagine glycosylation occurs at Asn-258. Cystine bridges form between Cys-271–Cys-319 and Cys-363–Cys-412. 2 N-linked (GlcNAc...) asparagine glycosylation sites follow: Asn-393 and Asn-394. Fibronectin type-III domains are found at residues 438–532 (PPRN…TLGE) and 535–630 (VPPP…ASER). N-linked (GlcNAc...) asparagine glycosylation is found at Asn-592, Asn-616, and Asn-646. Residues 653–673 (IVIGIHIGVTCIIFCVLFLLF) form a helical membrane-spanning segment. 2 disordered regions span residues 689-724 (LSPPQGPRSQRDPGILALNGLSRGEGGQLSRDEKPV) and 775-813 (TTEATSPCAGPGPVPAPQDIGPVPLSEGQTQPPAVAAPQ).

This sequence belongs to the immunoglobulin superfamily. DCC family. As to expression, detected in cerebellum, kidney, heart, lung, skeletal muscle and spleen.

It is found in the membrane. The chain is Immunoglobulin superfamily DCC subclass member 3 (Igdcc3) from Mus musculus (Mouse).